The following is a 956-amino-acid chain: MGDKEEVLEAVLKETVDLENVPIEEVFESLRCSREGLTTEAADERLALFGHNKLEEKKESKFLKFLGFMWNPLSWVMEAAAIMAIALANGGGKPPDWQDFVGIITLLVINSTISFIEENNAGNAAAALMARLAPKAKVLRDGRWGEQDAAILVPGDIISIKLGDIVPADARLLEGDPLKIDQSSLTGESLPVTKGPGDGVYSGSTCKQGELEAVVIATGVHTFFGKAAHLVDTTNHVGHFQQVLTAIGNFCICSIAVGMIIEIVVMYPIQHRAYRPGIDNLLVLLIGGIPIAMPTVLSVTMAIGSHRLSQQGAITKRMTAIEEMAGMDVLCSDKTGTLTLNKLTVDKNLIEVFTKGVDADTVVLMAAQASRLENQDAIDAAIVGMLADPKEARAGVREVHFLPFNPTDKRTALTYIDSDGKMHRVSKGAPEQILNLAHNRAEIERRVHAVIDKFAERGLRSLAVAYQEVPEGTKESAGGPWQFMGLMPLFDPPRHDSAETIRRALNLGVNVKMITGDQLAIGKETGRRLGMGTNMYPSSALLGQHKDESIGALPIDDLIEKADGFAGVFPEHKYEIVKRLQARKHICGMTGDGVNDAPALKKADIGIAVADATDAARSASDIVLTEPGLSVIISAVLTSRAIFQRMKNYTIYAVSITIRIVLGFMLLALIWKFDFPPFMVLIIAILNDGTIMTISKDRVKPSPLPDSWKLSEIFATGVVFGSYMAMMTVIFFWAAYKTDFFPRTFGVSTLEKTAHDDFRKLASAIYLQVSIISQALIFVTRSRSWSYVERPGMLLVVAFILAQLVATLIAVYANWSFAAIEGIGWGWAGVIWLYNIVFYIPLDIIKFLIRYALSGRAWDLVIEQRVAFTRQKDFGKEQRELQWAHAQRTLHGLQAPDAKMFPERTHFNELSQMAEEAKRRAEIARLRELHTLKGHVESVVRLKGLDIETIQQAYTV.

At 1–65 (MGDKEEVLEA…EKKESKFLKF (65 aa)) the chain is on the cytoplasmic side. A helical membrane pass occupies residues 66–85 (LGFMWNPLSWVMEAAAIMAI). The Extracellular segment spans residues 86-97 (ALANGGGKPPDW). A helical transmembrane segment spans residues 98-118 (QDFVGIITLLVINSTISFIEE). Topologically, residues 119 to 247 (NNAGNAAAAL…GHFQQVLTAI (129 aa)) are cytoplasmic. The chain crosses the membrane as a helical span at residues 248–268 (GNFCICSIAVGMIIEIVVMYP). At 269–277 (IQHRAYRPG) the chain is on the extracellular side. A helical membrane pass occupies residues 278–295 (IDNLLVLLIGGIPIAMPT). Topologically, residues 296-647 (VLSVTMAIGS…TSRAIFQRMK (352 aa)) are cytoplasmic. The active-site 4-aspartylphosphate intermediate is the Asp333. Mg(2+)-binding residues include Asp592 and Asp596. A helical membrane pass occupies residues 648–669 (NYTIYAVSITIRIVLGFMLLAL). Over 670-674 (IWKFD) the chain is Extracellular. A helical membrane pass occupies residues 675–697 (FPPFMVLIIAILNDGTIMTISKD). Over 698–713 (RVKPSPLPDSWKLSEI) the chain is Cytoplasmic. A helical transmembrane segment spans residues 714–734 (FATGVVFGSYMAMMTVIFFWA). At 735–759 (AYKTDFFPRTFGVSTLEKTAHDDFR) the chain is on the extracellular side. A helical membrane pass occupies residues 760–780 (KLASAIYLQVSIISQALIFVT). Topologically, residues 781–792 (RSRSWSYVERPG) are cytoplasmic. A helical transmembrane segment spans residues 793 to 813 (MLLVVAFILAQLVATLIAVYA). The Extracellular portion of the chain corresponds to 814–821 (NWSFAAIE). Residues 822–842 (GIGWGWAGVIWLYNIVFYIPL) traverse the membrane as a helical segment. Residues 843 to 956 (DIIKFLIRYA…IETIQQAYTV (114 aa)) are Cytoplasmic-facing. Thr889 bears the Phosphothreonine mark. The residue at position 938 (Ser938) is a Phosphoserine. The segment at 954 to 956 (YTV) is interaction with 14-3-3 proteins. Thr955 bears the Phosphothreonine mark.

This sequence belongs to the cation transport ATPase (P-type) (TC 3.A.3) family. Type IIIA subfamily. In terms of assembly, binds to 14-3-3 proteins. The binding is induced by phosphorylation of Thr-955. Binding to 14-3-3 proteins activates the H(+)-ATPase. In terms of tissue distribution, expressed in guard cells, mesophyll cells, leaves and roots.

Its subcellular location is the membrane. The enzyme catalyses ATP + H2O + H(+)(in) = ADP + phosphate + 2 H(+)(out). Its function is as follows. The plasma membrane H(+) ATPase of plants and fungi generates a proton gradient that drives the active transport of nutrients by H(+)-symport. The resulting external acidification and/or internal alkinization may mediate growth responses. The sequence is that of ATPase 11, plasma membrane-type (AHA11) from Arabidopsis thaliana (Mouse-ear cress).